The chain runs to 291 residues: 33 kDa chaperonin (291 aa).

2 disulfides stabilise this stretch: Cys-235–Cys-237 and Cys-268–Cys-271.

It belongs to the HSP33 family. In terms of processing, under oxidizing conditions two disulfide bonds are formed involving the reactive cysteines. Under reducing conditions zinc is bound to the reactive cysteines and the protein is inactive.

It is found in the cytoplasm. In terms of biological role, redox regulated molecular chaperone. Protects both thermally unfolding and oxidatively damaged proteins from irreversible aggregation. Plays an important role in the bacterial defense system toward oxidative stress. This is 33 kDa chaperonin from Streptococcus agalactiae serotype Ia (strain ATCC 27591 / A909 / CDC SS700).